Here is a 453-residue protein sequence, read N- to C-terminus: UDP-N-acetylmuramoylalanine--D-glutamate ligase (453 aa).

115 to 121 (GTNGKTT) provides a ligand contact to ATP.

The protein belongs to the MurCDEF family.

The protein resides in the cytoplasm. It carries out the reaction UDP-N-acetyl-alpha-D-muramoyl-L-alanine + D-glutamate + ATP = UDP-N-acetyl-alpha-D-muramoyl-L-alanyl-D-glutamate + ADP + phosphate + H(+). It functions in the pathway cell wall biogenesis; peptidoglycan biosynthesis. In terms of biological role, cell wall formation. Catalyzes the addition of glutamate to the nucleotide precursor UDP-N-acetylmuramoyl-L-alanine (UMA). This is UDP-N-acetylmuramoylalanine--D-glutamate ligase from Geotalea daltonii (strain DSM 22248 / JCM 15807 / FRC-32) (Geobacter daltonii).